Reading from the N-terminus, the 146-residue chain is Nitric oxide reductase subunit C (146 aa).

The helical; Signal-anchor transmembrane segment at 13-29 (IYFGGSVFFFLVFLGLT) threads the bilayer. Residues cysteine 61, cysteine 64, and histidine 65 each contribute to the heme c site.

As to quaternary structure, heterodimer of cytochromes b (large subunit) and c (small subunit).

Its subcellular location is the cell membrane. In terms of biological role, component of the anaerobic respiratory chain that transforms nitrate to dinitrogen (denitrification). This is Nitric oxide reductase subunit C (norC) from Stutzerimonas stutzeri (Pseudomonas stutzeri).